The sequence spans 1236 residues: ESX-4 secretion system protein EccC4 (1236 aa).

Transmembrane regions (helical) follow at residues 32–52 (LLPVVMSVATVGVMVTVFLPG) and 59–79 (PTFLAFPMMMLVSLVVTAVTG). FtsK domains follow at residues 407-607 (GTAV…SESR), 747-936 (RVPL…ADSE), and 1018-1201 (GQPV…DEGA). Residues 430-437 (GATGSGKS), 765-772 (GAPQTGKS), and 1035-1042 (GDNECGKT) contribute to the ATP site.

In terms of assembly, part of the ESX-4 / type VII secretion system (T7SS), which is composed of cytosolic and membrane components.

It localises to the cell membrane. In Mycobacterium tuberculosis (strain ATCC 25618 / H37Rv), this protein is ESX-4 secretion system protein EccC4 (eccC4).